A 206-amino-acid polypeptide reads, in one-letter code: Ribosomal RNA small subunit methyltransferase G (206 aa).

Residues Gly-74, Leu-79, 125–126 (VE), and Arg-140 each bind S-adenosyl-L-methionine.

Belongs to the methyltransferase superfamily. RNA methyltransferase RsmG family.

The protein localises to the cytoplasm. The catalysed reaction is guanosine(527) in 16S rRNA + S-adenosyl-L-methionine = N(7)-methylguanosine(527) in 16S rRNA + S-adenosyl-L-homocysteine. Specifically methylates the N7 position of guanine in position 527 of 16S rRNA. The polypeptide is Ribosomal RNA small subunit methyltransferase G (Shewanella frigidimarina (strain NCIMB 400)).